We begin with the raw amino-acid sequence, 110 residues long: Large ribosomal subunit protein uL22 (110 aa).

Belongs to the universal ribosomal protein uL22 family. Part of the 50S ribosomal subunit.

Its function is as follows. This protein binds specifically to 23S rRNA; its binding is stimulated by other ribosomal proteins, e.g. L4, L17, and L20. It is important during the early stages of 50S assembly. It makes multiple contacts with different domains of the 23S rRNA in the assembled 50S subunit and ribosome. Functionally, the globular domain of the protein is located near the polypeptide exit tunnel on the outside of the subunit, while an extended beta-hairpin is found that lines the wall of the exit tunnel in the center of the 70S ribosome. The chain is Large ribosomal subunit protein uL22 from Idiomarina loihiensis (strain ATCC BAA-735 / DSM 15497 / L2-TR).